The following is a 2541-amino-acid chain: Highly reducing polyketide synthase otaA (2541 aa).

The 423-residue stretch at 9–431 (SEPLAIIGLA…GTNAHVVLED (423 aa)) folds into the Ketosynthase family 3 (KS3) domain. Active-site for beta-ketoacyl synthase activity residues include C182, H317, and H355. Positions 571–888 (FIFTGQGANW…GSLLKRYETD (318 aa)) constitute a Malonyl-CoA:ACP transacylase (MAT) domain. Residues 957–1092 (HELLGVPVED…GSVRVETGPH (136 aa)) are N-terminal hotdog fold. Positions 957-1251 (HELLGVPVED…GLDLVQLPPS (295 aa)) are dehydratase (DH) domain. A PKS/mFAS DH domain is found at 957–1254 (HELLGVPVED…LVQLPPSEDA (298 aa)). Residues 1108–1254 (TESVDIAQMY…LVQLPPSEDA (147 aa)) form a C-terminal hotdog fold region. Residues I1420 and E1442 each coordinate S-adenosyl-L-methionine. Residues 1433 to 1605 (HAQTGIKVLE…DQELRNAGLQ (173 aa)) are methyltransferase (CMeT) domain. In terms of domain architecture, Enoyl reductase (ER) spans 1838–2141 (HQPNGFHFVE…RQGNAGPWVL (304 aa)). A Ketoreductase (KR) domain is found at 2165–2344 (ASYLLIGGFG…PATSISLGSV (180 aa)). Positions 2453–2530 (DAVELVTRAI…QLAQQAAGGS (78 aa)) constitute a Carrier domain. S2490 carries the post-translational modification O-(pantetheine 4'-phosphoryl)serine.

It depends on pantetheine 4'-phosphate as a cofactor.

The catalysed reaction is 4 malonyl-CoA + acetyl-CoA + 5 NADPH + 9 H(+) = 7-methylmellein + 3 CO2 + 5 NADP(+) + 5 CoA + 4 H2O. Its pathway is mycotoxin biosynthesis. In terms of biological role, highly reducing polyketide synthase; part of the gene cluster that mediates the biosynthesis of ochratoxin A (OTA), a mycotoxin composed of a chlorinated type I polyketide dihydroisocoumarin moiety linked to L-phenylalanine, and demonstrated to have nephrotoxic, immunotoxic, genotoxic, neurotoxic, and teratogenic properties. OtaA catalyzes the condensation of one acetate and 4 malonate units to form the isocoumarin group. The pathway begins with the highly reducing polyketide synthase otaA that catalyzes the formation of the isocoumarin group during the initial stages of biosynthesis, starting from one acetate and 4 malonate units, to originate the characteristic pentaketide skeleton 7-methylmellein (7-MM) of the OTA molecule. The newly identified cyclase otaY might be involved in the polyketide cyclization reaction during the initial steps of the OTA biosynthesis. 7-MM is then oxidized into 7-carboxymellein (also called ochratoxin beta) by the cytochrome P450 monooxygenase otaC. The NRPS encoded by the otaB gene is involved in the linking of phenylalanine to the dihydroisocoumarin ring. The reaction catalyzed by NRPS results in the production of ochratoxin B (OTB), which is the non-chlorinated analog of OTA and which subsequently serves as the substrate of the halogenase otaD for chlorination activity to form the final molecular structure of OTA, containing a chlorine atom in the C-5 position of the molecule. This chain is Highly reducing polyketide synthase otaA, found in Aspergillus carbonarius (strain ITEM 5010).